Here is a 515-residue protein sequence, read N- to C-terminus: Probable cytosol aminopeptidase (515 aa).

2 residues coordinate Mn(2+): K274 and D279. K286 is a catalytic residue. D297, D356, and E358 together coordinate Mn(2+). The active site involves R360.

The protein belongs to the peptidase M17 family. Mn(2+) serves as cofactor.

Its subcellular location is the cytoplasm. It catalyses the reaction Release of an N-terminal amino acid, Xaa-|-Yaa-, in which Xaa is preferably Leu, but may be other amino acids including Pro although not Arg or Lys, and Yaa may be Pro. Amino acid amides and methyl esters are also readily hydrolyzed, but rates on arylamides are exceedingly low.. The enzyme catalyses Release of an N-terminal amino acid, preferentially leucine, but not glutamic or aspartic acids.. Functionally, presumably involved in the processing and regular turnover of intracellular proteins. Catalyzes the removal of unsubstituted N-terminal amino acids from various peptides. The protein is Probable cytosol aminopeptidase of Desulforapulum autotrophicum (strain ATCC 43914 / DSM 3382 / VKM B-1955 / HRM2) (Desulfobacterium autotrophicum).